We begin with the raw amino-acid sequence, 974 residues long: Translation initiation factor IF-2 (974 aa).

Disordered stretches follow at residues T67–I86, D101–A133, and R146–A385. Over residues G105–A114 the composition is skewed to low complexity. Composition is skewed to basic and acidic residues over residues E121–A133 and R146–A181. The span at A182–E197 shows a compositional bias: low complexity. Over residues E210–R261 the composition is skewed to basic and acidic residues. Residues P313 to G329 are compositionally biased toward low complexity. A compositionally biased stretch (gly residues) spans S358–K371. One can recognise a tr-type G domain in the interval P474–K643. The segment at G483–T490 is G1. G483–T490 contributes to the GTP binding site. The interval G508–H512 is G2. The segment at D529–G532 is G3. GTP is bound by residues D529–H533 and N583–D586. Residues N583–D586 form a G4 region. The segment at S619–K621 is G5.

This sequence belongs to the TRAFAC class translation factor GTPase superfamily. Classic translation factor GTPase family. IF-2 subfamily.

It localises to the cytoplasm. One of the essential components for the initiation of protein synthesis. Protects formylmethionyl-tRNA from spontaneous hydrolysis and promotes its binding to the 30S ribosomal subunits. Also involved in the hydrolysis of GTP during the formation of the 70S ribosomal complex. In Burkholderia vietnamiensis (strain G4 / LMG 22486) (Burkholderia cepacia (strain R1808)), this protein is Translation initiation factor IF-2.